Consider the following 376-residue polypeptide: Zinc transporter 7 (376 aa).

Over 1 to 37 (MLPLSIKDDEYKPPKFNLFGKISGWFRSILSDKTSRN) the chain is Cytoplasmic. A helical membrane pass occupies residues 38-58 (LFFFLCLNLSFAFVELLYGIW). The Lumenal segment spans residues 59-67 (SNCLGLISD). The chain crosses the membrane as a helical span at residues 68–88 (SFHMFFDSTAILAGLAASVIS). At 89–102 (KWRDNDAFSYGYVR) the chain is on the cytoplasmic side. Residues 103-123 (AEVLAGFVNGLFLIFTAFFIF) traverse the membrane as a helical segment. Residues 124-140 (SEGVERALAPPDVHHER) are Lumenal-facing. A helical transmembrane segment spans residues 141 to 161 (LLLVSILGFVVNLIGIFVFKH). Residues 161–218 (HGGHGHSHGSGHGHSHSLFNGALDQAHGHVDHCHSHEVKHGAAHSHDHAHGHGHFHSH) are his-rich loop. Topologically, residues 162–236 (GGHGHSHGSG…TGPSRQILQG (75 aa)) are cytoplasmic. Basic and acidic residues predominate over residues 194–222 (HSHEVKHGAAHSHDHAHGHGHFHSHDGPS). A disordered region spans residues 194 to 226 (HSHEVKHGAAHSHDHAHGHGHFHSHDGPSLKET). The helical transmembrane segment at 237 to 257 (VFLHILADTLGSIGVIASAIM) threads the bilayer. Over 258–262 (MQNFG) the chain is Lumenal. A helical membrane pass occupies residues 263–283 (LMIADPICSILIAILIVVSVI). At 284–376 (PLLRESVGIL…LYVQIDFAAM (93 aa)) the chain is on the cytoplasmic side.

Belongs to the cation diffusion facilitator (CDF) transporter (TC 2.A.4) family. SLC30A subfamily. As to quaternary structure, homooligomer. In terms of tissue distribution, highly expressed in megakaryocytes and other bone marrow cells and in the epithelium of the small intestine. Expressed in testis (in Leydig cells), adrenal gland (in adrenal medula, zona fasciculata and zona of reticularis), and pituitary gland (in somatotropic cells).

The protein resides in the golgi apparatus membrane. It is found in the cytoplasmic vesicle. Its subcellular location is the golgi apparatus. The protein localises to the trans-Golgi network. It localises to the sarcoplasmic reticulum. The protein resides in the mitochondrion. The catalysed reaction is Zn(2+)(in) = Zn(2+)(out). Functionally, zinc ion transporter mediating zinc entry from the cytosol into the lumen of organelles along the secretory pathway. By contributing to zinc ion homeostasis within the early secretory pathway, regulates the activation and folding of enzymes like alkaline phosphatases. The protein is Zinc transporter 7 of Homo sapiens (Human).